The primary structure comprises 514 residues: Carboxysome shell carbonic anhydrase (514 aa).

The interval 1–27 (MAYRNRNLASQTQRPLAPTAPRRRPVV) is disordered. Cys175 is a Zn(2+) binding site. Asp177 (proton acceptor) is an active-site residue. The Zn(2+) site is built by His243 and Cys254.

Belongs to the beta-class carbonic anhydrase family. CsoSCA subfamily. In terms of assembly, homodimer. The cofactor is Zn(2+).

Its subcellular location is the carboxysome. The enzyme catalyses hydrogencarbonate + H(+) = CO2 + H2O. Its function is as follows. Reversible hydration of carbon dioxide. Essential for photosynthetic carbon dioxide fixation, supplies CO(2) to RuBisCO (ribulose bisphosphate carboxylase, cbbL-cbbS) in the carboxysome. The sequence is that of Carboxysome shell carbonic anhydrase from Prochlorococcus marinus (strain MIT 9313).